A 1093-amino-acid polypeptide reads, in one-letter code: Regulatory protein SWI4 (1093 aa).

An HTH APSES-type domain is found at 37 to 147; the sequence is IEIATYSETD…FQFDPNNPPP (111 aa). The H-T-H motif DNA-binding region spans 71–92; that stretch reads ITQVFKIAQFSKTKRTKILEKE. Residues 138-210 are disordered; that stretch reads FQFDPNNPPP…NQPNPSPLQN (73 aa). The span at 152–172 shows a compositional bias: polar residues; that stretch reads NSILRKTSPGTKITSPSSYNK. Residues 179 to 201 show a composition bias toward low complexity; that stretch reads SSSSTSATTTAANKKGKKNASIN. Residue serine 255 is modified to Phosphoserine. Low complexity predominate over residues 448-457; that stretch reads NSMNMSSRSM. Positions 448 to 468 are disordered; the sequence is NSMNMSSRSMTPFSAGNTSSQ. The span at 458-468 shows a compositional bias: polar residues; it reads TPFSAGNTSSQ. 2 ANK repeats span residues 520-549 and 641-670; these read QGHT…NALQ and IGNT…STDI. Serine 806 carries the post-translational modification Phosphoserine. Disordered regions lie at residues 813-855 and 973-1017; these read RSQS…SSLL and QDEE…DAKF. Residues 818-837 show a composition bias toward basic and acidic residues; the sequence is SDEKEKAKDNENQVEKKKDP. Residues 846 to 855 show a composition bias toward low complexity; it reads PSLESPSSLL. The segment covering 1000–1010 has biased composition (polar residues); sequence KSTSETSSPKN.

In terms of assembly, component of the transcription complex SCB-binding factor (SBF) composed of SWI6 and SWI4. Interacts with MSA2.

Part of a complex involved in cell-cycle-dependent transcription. SWI4 and SWI6 are required for formation of the cell-cycle box factor-DNA complex. The repeated element in the upstream region of HO (5'-CACGAAAA-3') is called the cell cycle box (CCB). This is Regulatory protein SWI4 (SWI4) from Saccharomyces cerevisiae (strain ATCC 204508 / S288c) (Baker's yeast).